Consider the following 632-residue polypeptide: DNA mismatch repair protein MutL (632 aa).

A disordered region spans residues 376 to 397; sequence EQPQAEPRQSFTPGSGAGSGYQ.

The protein belongs to the DNA mismatch repair MutL/HexB family.

Its function is as follows. This protein is involved in the repair of mismatches in DNA. It is required for dam-dependent methyl-directed DNA mismatch repair. May act as a 'molecular matchmaker', a protein that promotes the formation of a stable complex between two or more DNA-binding proteins in an ATP-dependent manner without itself being part of a final effector complex. This Pseudomonas entomophila (strain L48) protein is DNA mismatch repair protein MutL.